The primary structure comprises 229 residues: Ribonuclease T (229 aa).

The 175-residue stretch at 23–197 (VIIDVETAGF…YDTERTAKLF (175 aa)) folds into the Exonuclease domain. Asp-26, Glu-28, His-184, and Asp-189 together coordinate Mg(2+). Residue His-184 is the Proton donor/acceptor of the active site.

It belongs to the RNase T family. As to quaternary structure, homodimer. The cofactor is Mg(2+).

Its function is as follows. Trims short 3' overhangs of a variety of RNA species, leaving a one or two nucleotide 3' overhang. Responsible for the end-turnover of tRNA: specifically removes the terminal AMP residue from uncharged tRNA (tRNA-C-C-A). Also appears to be involved in tRNA biosynthesis. This is Ribonuclease T from Haemophilus influenzae (strain ATCC 51907 / DSM 11121 / KW20 / Rd).